We begin with the raw amino-acid sequence, 229 residues long: Juvenile hormone-binding protein (229 aa).

The signal sequence occupies residues 1 to 3; the sequence is VLS.

Its subcellular location is the secreted. In terms of biological role, prevents juvenile hormone from being hydrolyzed by general esterases by combining with it specifically. The polypeptide is Juvenile hormone-binding protein (JHBP) (Manduca sexta (Tobacco hawkmoth)).